We begin with the raw amino-acid sequence, 2742 residues long: Polycystin-1-like protein 1 (2742 aa).

At 1-1602 (MFCLWIFSLA…LDQFLSVSRD (1602 aa)) the chain is on the extracellular side. 5 N-linked (GlcNAc...) asparagine glycosylation sites follow: N35, N133, N149, N220, and N267. 2 consecutive PKD domains span residues 286–372 (AVRI…VKLN) and 370–454 (KLNR…PCQP). N-linked (GlcNAc...) asparagine glycosylation is found at N383, N397, N486, N545, N693, N709, and N735. The region spanning 452 to 1338 (CQPPPVKNLG…ITFFLPASLI (887 aa)) is the REJ domain. 2 disordered regions span residues 767–829 (SPSR…QSDP) and 846–908 (DLRG…RPSV). Over residues 779–799 (SELTDSPVSSVTVGFSGSESF) the composition is skewed to polar residues. The span at 880-893 (SFPSDSDSFSHSSS) shows a compositional bias: low complexity. Residues N1080, N1101, N1201, N1318, N1437, N1490, and N1568 are each glycosylated (N-linked (GlcNAc...) asparagine). The GAIN-B domain maps to 1436 to 1587 (HNFSITQEHL…KVLQQQIQSS (152 aa)). Intrachain disulfides connect C1541–C1569 and C1556–C1571. Residues 1541 to 1587 (CLSWEDQQGSWTQNGCRAQTNDKTSAVNCSCHHLKPLKVLQQQIQSS) form a GPS region. The chain crosses the membrane as a helical span at residues 1603-1623 (LTVVFVLLLCVSLNIPVLVWC). The Cytoplasmic portion of the chain corresponds to 1624–1812 (KKTDATSEEN…SPHLFTRAQR (189 aa)). One can recognise a PLAT domain in the interval 1648–1769 (HFYAVTVHTG…GDGQVERMLR (122 aa)). A helical membrane pass occupies residues 1813-1833 (LCVCLLLFLGYACVNIIITHQ). The Extracellular portion of the chain corresponds to 1834 to 1851 (RDDQLPFDLGVIDVTSVS). Residues 1852–1872 (IATGLVSVVAVLPVAMVISFL) traverse the membrane as a helical segment. Residues 1873-2005 (FRVKSGRMTL…YRLASLLYHC (133 aa)) are Cytoplasmic-facing. The helical transmembrane segment at 2006-2026 (VAWTLCLLFCLSCLILSAVLG) threads the bilayer. The Extracellular segment spans residues 2027-2040 (TRLNSGKILHWIHS). Residues 2041 to 2061 (LFVSLTFCFFVIHPATILVLA) traverse the membrane as a helical segment. The Cytoplasmic segment spans residues 2062-2151 (AVVSWRFKRS…KQAVIHKMLR (90 aa)). Residues 2152-2172 (DLCLCGSMFFLMVCITYGSPV) form a helical membrane-spanning segment. At 2173–2344 (DEHYPLNAAF…QSVRLYHSPS (172 aa)) the chain is on the extracellular side. N-linked (GlcNAc...) asparagine glycosylation is present at N2218. The chain crosses the membrane as a helical span at residues 2345–2365 (MLDYTVMVWQLLFLLLSLVNL). The Cytoplasmic portion of the chain corresponds to 2366–2378 (YHQTSTAAQHGLM). A helical membrane pass occupies residues 2379–2401 (GYWKTTSISVEVSLVIVSLVYYV). Residues 2402–2442 (HYVYHPTMVMEVAEQLRRNHREHVDVSTLANSEQFSRTLRG) lie on the Extracellular side of the membrane. Residues 2443–2463 (IILFLLAVKCVTVVRLNRILA) traverse the membrane as a helical segment. The Cytoplasmic portion of the chain corresponds to 2464 to 2467 (PSMP). Residues 2468–2488 (LLSLSSLLWPAISGLLLLSIF) form a helical membrane-spanning segment. The Extracellular portion of the chain corresponds to 2489–2528 (SCMGRLLYIERTFHSIQTVLWHFWSLRKSRDLISLWRDFY). A helical membrane pass occupies residues 2529-2549 (YFGLLYASSAMLTTMVFAVMI). Residues 2550-2742 (RKAKRSPSTK…LVHHEQGTKN (193 aa)) are Cytoplasmic-facing.

The protein belongs to the polycystin family. Heterodimer. Interacts with pkd2 to form a calcium channel. Interacts with pkd2l1 to form ciliary calcium channel. Expressed in Kupffer's vesicle, an organ equivalent to the node.

The protein resides in the cell projection. The protein localises to the cilium membrane. In terms of biological role, component of a calcium-permeant ion channel formed by PKD1L2 and PKD1L1 in primary cilia, where it controls cilium calcium concentration, without affecting cytoplasmic calcium concentration, and regulates sonic hedgehog/SHH signaling and GLI2 transcription. The PKD1L1:PKD2L1 channel complex is mechanosensitive only at high pressures and is highly temperature sensitive. Also involved in left/right axis specification downstream of nodal flow by forming a complex with PKD2 in cilia to facilitate flow detection in left/right patterning. This chain is Polycystin-1-like protein 1, found in Oryzias latipes (Japanese rice fish).